The following is a 259-amino-acid chain: uncharacterized protein (259 aa).

A disordered region spans residues Leu-171–Phe-259. The span at Ser-179–Thr-201 shows a compositional bias: polar residues. The segment covering Arg-202 to Asn-211 has biased composition (basic residues). Positions Tyr-212–Tyr-236 are enriched in polar residues.

The protein resides in the virion. This is an uncharacterized protein from Acanthamoeba polyphaga (Amoeba).